Here is a 440-residue protein sequence, read N- to C-terminus: Trigger factor (440 aa).

The region spanning 176-261 (GDKVVIDYQN…VKSIYVVKDV (86 aa)) is the PPIase FKBP-type domain.

Belongs to the FKBP-type PPIase family. Tig subfamily.

The protein resides in the cytoplasm. The enzyme catalyses [protein]-peptidylproline (omega=180) = [protein]-peptidylproline (omega=0). In terms of biological role, involved in protein export. Acts as a chaperone by maintaining the newly synthesized protein in an open conformation. Functions as a peptidyl-prolyl cis-trans isomerase. This Ehrlichia canis (strain Jake) protein is Trigger factor.